A 208-amino-acid chain; its full sequence is Protein GrpE (208 aa).

The segment covering 1-12 has biased composition (basic and acidic residues); sequence MTNKDESVKKNT. A disordered region spans residues 1–51; sequence MTNKDESVKKNTESTVEETNVKQNIDDSVEQAEESKGHLQDEAIEETSDEN. A compositionally biased stretch (polar residues) spans 13 to 23; it reads ESTVEETNVKQ. Positions 42-51 are enriched in acidic residues; it reads EAIEETSDEN.

Belongs to the GrpE family. Homodimer.

The protein localises to the cytoplasm. Functionally, participates actively in the response to hyperosmotic and heat shock by preventing the aggregation of stress-denatured proteins, in association with DnaK and GrpE. It is the nucleotide exchange factor for DnaK and may function as a thermosensor. Unfolded proteins bind initially to DnaJ; upon interaction with the DnaJ-bound protein, DnaK hydrolyzes its bound ATP, resulting in the formation of a stable complex. GrpE releases ADP from DnaK; ATP binding to DnaK triggers the release of the substrate protein, thus completing the reaction cycle. Several rounds of ATP-dependent interactions between DnaJ, DnaK and GrpE are required for fully efficient folding. The sequence is that of Protein GrpE from Staphylococcus aureus (strain COL).